A 203-amino-acid polypeptide reads, in one-letter code: Ras-related protein Rab-13 (203 aa).

Positions 17, 18, 20, 21, 22, 23, and 40 each coordinate GTP. T22 serves as a coordination point for Mg(2+). The Switch 1 signature appears at 31–45 (DNFNSTYISTIGIDF). T40 contributes to the Mg(2+) binding site. Residues K46 and K58 each participate in a glycyl lysine isopeptide (Lys-Gly) (interchain with G-Cter in ubiquitin) cross-link. D63 contacts Mg(2+). The Switch 2 motif lies at 63–80 (DTAGQERFKTITTAYYRG). GTP is bound by residues G66, N121, K122, D124, A152, and K153. The interval 173-203 (TGGRRSGNSSKPSSTDLKVSDKKNSNKCSLG) is disordered. S178 carries the phosphoserine modification. Positions 178 to 189 (SGNSSKPSSTDL) are enriched in polar residues. C200 carries the cysteine methyl ester modification. C200 carries S-geranylgeranyl cysteine lipidation. A propeptide spans 201–203 (SLG) (removed in mature form).

Belongs to the small GTPase superfamily. Rab family. In terms of assembly, interacts (GTP-bound form) with MICALL2; competes with RAB8A and is involved in tight junctions assembly. Interacts (GTP-bound form) with MICALL1. Interacts (GTP-bound form) with MICAL1, MICAL3, MICALCL, EHBP1 and EHBP1L1; ternary complexes of RAB8A, RAB13 and either MICAL1 or EHBP1L1 are possible. Interacts with PRKACA; downstream effector of RAB13 involved in tight junction assembly. Interacts with GRB2; may recruit RAB13 to the leading edge of migrating endothelial cells where it can activate RHOA. Interacts (isoprenylated form) with PDE6D; dissociates RAB13 from membranes. Interacts with BICDL2/BICDR2. Interacts with LEPROT and LEPROTL1. Requires Mg(2+) as cofactor. In terms of processing, ubiquitinated via 'Lys-11'-linked ubiquitination on Lys-46 and Lys-58; impairing the recruitment of guanosine diphosphate (GDP) dissociation inhibitor 1/GDI1. As to expression, highest levels found in lung, kidney, whole brain and spinal cord. Expressed in all tissues tested including Sertoli and germ cells (at protein level). Also detected in osteoclasts.

The protein resides in the cell membrane. The protein localises to the cytoplasmic vesicle membrane. It is found in the cell junction. It localises to the tight junction. Its subcellular location is the golgi apparatus. The protein resides in the trans-Golgi network membrane. The protein localises to the recycling endosome membrane. It is found in the cell projection. It localises to the lamellipodium. It carries out the reaction GTP + H2O = GDP + phosphate + H(+). Its activity is regulated as follows. Regulated by guanine nucleotide exchange factors (GEFs) including DENND1C, which promote the exchange of bound GDP for free GTP. Regulated by GTPase activating proteins (GAPs) which increase the GTP hydrolysis activity. Inhibited by GDP dissociation inhibitors (GDIs). Activated in response to insulin. Functionally, the small GTPases Rab are key regulators of intracellular membrane trafficking, from the formation of transport vesicles to their fusion with membranes. Rabs cycle between an inactive GDP-bound form and an active GTP-bound form that is able to recruit to membranes different sets of downstream effectors directly responsible for vesicle formation, movement, tethering and fusion. RAB13 is involved in endocytic recycling and regulates the transport to the plasma membrane of transmembrane proteins like the tight junction protein OCLN/occludin. Thereby, it regulates the assembly and the activity of tight junctions. Moreover, it may also regulate tight junction assembly by activating the PKA signaling pathway and by reorganizing the actin cytoskeleton through the activation of the downstream effectors PRKACA and MICALL2 respectively. Through its role in tight junction assembly, may play a role in the establishment of Sertoli cell barrier. Plays also a role in angiogenesis through regulation of endothelial cells chemotaxis. Also involved in neurite outgrowth. Has also been proposed to play a role in post-Golgi membrane trafficking from the TGN to the recycling endosome. Finally, it has been involved in insulin-induced transport to the plasma membrane of the glucose transporter GLUT4 and therefore may play a role in glucose homeostasis. The protein is Ras-related protein Rab-13 of Rattus norvegicus (Rat).